Consider the following 204-residue polypeptide: MISAQAVKELRERTGAGMMDCKKALMEANGDMEKAIDILREKGLAAAAKKAGRVANEGLVDAYIHSGGRIGVLVEVNCETDFVANTDEFKNFVKEICMQIAAANPKYISREDVPQAVLEKEREILKAQALNEGKPQNVVDRIVEGRIEKFYKENCLLEQEYIRDPEKTVKDLLNETIAKLGENIVIRRFVRFERGEGIETSSNE.

The interval 80–83 is involved in Mg(2+) ion dislocation from EF-Tu; it reads TDFV.

The protein belongs to the EF-Ts family.

The protein resides in the cytoplasm. Functionally, associates with the EF-Tu.GDP complex and induces the exchange of GDP to GTP. It remains bound to the aminoacyl-tRNA.EF-Tu.GTP complex up to the GTP hydrolysis stage on the ribosome. The sequence is that of Elongation factor Ts from Thermoanaerobacter sp. (strain X514).